The chain runs to 434 residues: Gamma-enolase (434 aa).

N-acetylserine is present on S2. Residue K5 is modified to N6-acetyllysine. T26 carries the post-translational modification Phosphothreonine. Residue S40 coordinates Mg(2+). Phosphotyrosine is present on Y44. An N6-acetyllysine; alternate modification is found at K60. K60 bears the N6-succinyllysine; alternate mark. Residue K64 is modified to N6-acetyllysine. K89 is modified (N6-acetyllysine; alternate). K89 is subject to N6-succinyllysine; alternate. The substrate site is built by H158 and E167. Residues K193, K197, and K199 each carry the N6-acetyllysine modification. At K202 the chain carries N6-acetyllysine; alternate. Residue K202 forms a Glycyl lysine isopeptide (Lys-Gly) (interchain with G-Cter in SUMO2); alternate linkage. The Proton donor role is filled by E210. N6-acetyllysine; alternate is present on residues K228 and K233. At K228 the chain carries N6-succinyllysine; alternate. K233 carries the N6-(2-hydroxyisobutyryl)lysine; alternate modification. D245 is a binding site for Mg(2+). Position 256 is an N6-acetyllysine (K256). S263 is subject to Phosphoserine. At Y287 the chain carries Phosphotyrosine. Residue S291 is modified to Phosphoserine. Positions 293 and 318 each coordinate Mg(2+). Residues E293 and D318 each contribute to the substrate site. K335 and K343 each carry N6-acetyllysine. K343 serves as the catalytic Proton acceptor. Residues 370–373 (SHRS) and K394 contribute to the substrate site. K406 carries the N6-acetyllysine modification.

Belongs to the enolase family. As to quaternary structure, mammalian enolase is composed of 3 isozyme subunits, alpha, beta and gamma, which can form homodimers or heterodimers which are cell-type and development-specific. The cofactor is Mg(2+). As to expression, skeletal muscle (at protein level). The alpha/alpha homodimer is expressed in embryo and in most adult tissues. The alpha/beta heterodimer and the beta/beta homodimer are found in striated muscle, and the alpha/gamma heterodimer and the gamma/gamma homodimer in neurons.

It localises to the cytoplasm. The protein localises to the cell membrane. The enzyme catalyses (2R)-2-phosphoglycerate = phosphoenolpyruvate + H2O. It functions in the pathway carbohydrate degradation; glycolysis; pyruvate from D-glyceraldehyde 3-phosphate: step 4/5. In terms of biological role, has neurotrophic and neuroprotective properties on a broad spectrum of central nervous system (CNS) neurons. Binds, in a calcium-dependent manner, to cultured neocortical neurons and promotes cell survival. This chain is Gamma-enolase (Eno2), found in Mus musculus (Mouse).